The chain runs to 505 residues: Glycerol kinase 3 (505 aa).

T12 contributes to the ADP binding site. Residues T12, T13, and S14 each contribute to the ATP site. Residue T12 coordinates sn-glycerol 3-phosphate. R16 is a binding site for ADP. Sn-glycerol 3-phosphate contacts are provided by R82, E83, Y134, and D249. The glycerol site is built by R82, E83, Y134, D249, and Q250. 2 residues coordinate ADP: T271 and G315. The ATP site is built by T271, G315, Q319, and G416. 2 residues coordinate ADP: G416 and N420.

Belongs to the FGGY kinase family.

It carries out the reaction glycerol + ATP = sn-glycerol 3-phosphate + ADP + H(+). It functions in the pathway polyol metabolism; glycerol degradation via glycerol kinase pathway; sn-glycerol 3-phosphate from glycerol: step 1/1. Inhibited by fructose 1,6-bisphosphate (FBP). Its function is as follows. Key enzyme in the regulation of glycerol uptake and metabolism. Catalyzes the phosphorylation of glycerol to yield sn-glycerol 3-phosphate. This chain is Glycerol kinase 3, found in Streptomyces avermitilis (strain ATCC 31267 / DSM 46492 / JCM 5070 / NBRC 14893 / NCIMB 12804 / NRRL 8165 / MA-4680).